A 32-amino-acid polypeptide reads, in one-letter code: Delta-conotoxin-like CnVID (32 aa).

3 cysteine pairs are disulfide-bonded: C3–C18, C10–C22, and C17–C27. 4-hydroxyproline is present on residues P6 and P14.

Belongs to the conotoxin O1 superfamily. In terms of tissue distribution, expressed by the venom duct.

The protein resides in the secreted. Functionally, delta-conotoxins bind to site 6 of voltage-gated sodium channels (Nav) and inhibit the inactivation process. This toxin acts on Nav1.2/SCN2A, Nav1.3/SCN3A and Nav1.6/SCN8A (EC(50)=1.7 uM). This is Delta-conotoxin-like CnVID from Conus consors (Singed cone).